We begin with the raw amino-acid sequence, 146 residues long: Snaclec echicetin subunit beta (146 aa).

Residues 1-23 (MGRFISVSFGLLVLLLSLSGTGA) form the signal peptide. Intrachain disulfides connect cysteine 25-cysteine 36, cysteine 53-cysteine 142, and cysteine 119-cysteine 134. Positions 32-143 (YEGYCYKVFK…CTWTFSFVCK (112 aa)) constitute a C-type lectin domain.

This sequence belongs to the snaclec family. As to quaternary structure, heterodimer of subunits alpha and beta; disulfide-linked. As to expression, expressed by the venom gland.

The protein localises to the secreted. Functionally, binding of echicetin to glycoprotein Ibalpha (GP1BA) receptor on platelets alone results in inhibition of platelet aggregation, while binding to both GPIba receptor and IgMk promotes platelet aggregation and signal transduction. In Echis carinatus (Saw-scaled viper), this protein is Snaclec echicetin subunit beta.